The primary structure comprises 484 residues: Hemogen (484 aa).

Positions Met-1 to Ser-25 are enriched in basic and acidic residues. Disordered stretches follow at residues Met-1–Trp-32 and Lys-44–Gln-91. Residues Gln-7 to Glu-87 form a necessary for nuclear localization region. Positions Lys-61–Gln-79 are enriched in basic residues. Phosphoserine occurs at positions 123, 159, 181, 188, and 201. Thr-246 is subject to Phosphothreonine. Disordered regions lie at residues Asp-265–Gly-290, Glu-306–Glu-369, and Gln-386–Glu-471. Positions Glu-306–Glu-320 are enriched in basic and acidic residues. 2 positions are modified to phosphoserine: Ser-349 and Ser-353. Position 360 is a phosphothreonine (Thr-360). Ser-363 and Ser-367 each carry phosphoserine. Composition is skewed to basic and acidic residues over residues Tyr-413–Gln-428, Pro-438–Asp-447, and Glu-454–Pro-463.

Expressed in hematopoietic precursor cells, thyroid and spermatids (at protein level). Expressed in bone marrow, testis, thymus. Expressed in prostate cancer and ovarian cancer. Also expressed in thymus and thyroid tumors, non-Hodgkin lymphoma, various leukemia cell lines, peripheral blood mononuclear cells (PBMCs) and bone marrow mononuclear cells (BMMCs) of patients with leukemia.

It is found in the nucleus. Regulates the proliferation and differentiation of hematopoietic cells. Overexpression block the TPA-induced megakaryocytic differentiation in the K562 cell model. May also prevent cell apoptosis through the activation of the nuclear factor-kappa B (NF-kB). This is Hemogen (HEMGN) from Homo sapiens (Human).